The sequence spans 238 residues: Ribonuclease PH (238 aa).

Phosphate-binding positions include arginine 86 and 124–126; that span reads GTR.

Belongs to the RNase PH family. Homohexameric ring arranged as a trimer of dimers.

The enzyme catalyses tRNA(n+1) + phosphate = tRNA(n) + a ribonucleoside 5'-diphosphate. Phosphorolytic 3'-5' exoribonuclease that plays an important role in tRNA 3'-end maturation. Removes nucleotide residues following the 3'-CCA terminus of tRNAs; can also add nucleotides to the ends of RNA molecules by using nucleoside diphosphates as substrates, but this may not be physiologically important. Probably plays a role in initiation of 16S rRNA degradation (leading to ribosome degradation) during starvation. The chain is Ribonuclease PH from Pectobacterium atrosepticum (strain SCRI 1043 / ATCC BAA-672) (Erwinia carotovora subsp. atroseptica).